Here is a 66-residue protein sequence, read N- to C-terminus: Large ribosomal subunit protein bL33 (66 aa).

The protein belongs to the bacterial ribosomal protein bL33 family.

The sequence is that of Large ribosomal subunit protein bL33 from Synechococcus sp. (strain CC9902).